Here is a 316-residue protein sequence, read N- to C-terminus: Lipoyl synthase (316 aa).

Over residues 1-15 (MKARNESMSKGEYKT) the composition is skewed to basic and acidic residues. The disordered stretch occupies residues 1 to 33 (MKARNESMSKGEYKTKSLKNRPDPTQPKLKKPS). Residues cysteine 64, cysteine 69, cysteine 75, cysteine 90, cysteine 94, cysteine 97, and serine 304 each coordinate [4Fe-4S] cluster. The region spanning 76–293 (FGHGTATFMI…EQAGMEMGFT (218 aa)) is the Radical SAM core domain.

The protein belongs to the radical SAM superfamily. Lipoyl synthase family. It depends on [4Fe-4S] cluster as a cofactor.

It is found in the cytoplasm. The enzyme catalyses [[Fe-S] cluster scaffold protein carrying a second [4Fe-4S](2+) cluster] + N(6)-octanoyl-L-lysyl-[protein] + 2 oxidized [2Fe-2S]-[ferredoxin] + 2 S-adenosyl-L-methionine + 4 H(+) = [[Fe-S] cluster scaffold protein] + N(6)-[(R)-dihydrolipoyl]-L-lysyl-[protein] + 4 Fe(3+) + 2 hydrogen sulfide + 2 5'-deoxyadenosine + 2 L-methionine + 2 reduced [2Fe-2S]-[ferredoxin]. Its pathway is protein modification; protein lipoylation via endogenous pathway; protein N(6)-(lipoyl)lysine from octanoyl-[acyl-carrier-protein]: step 2/2. In terms of biological role, catalyzes the radical-mediated insertion of two sulfur atoms into the C-6 and C-8 positions of the octanoyl moiety bound to the lipoyl domains of lipoate-dependent enzymes, thereby converting the octanoylated domains into lipoylated derivatives. The sequence is that of Lipoyl synthase from Hydrogenovibrio crunogenus (strain DSM 25203 / XCL-2) (Thiomicrospira crunogena).